A 90-amino-acid polypeptide reads, in one-letter code: Acylphosphatase (90 aa).

The region spanning 3-88 (TWHMTAHGRV…GKFEDFDLRP (86 aa)) is the Acylphosphatase-like domain. Residues R18 and N36 contribute to the active site.

It belongs to the acylphosphatase family.

The catalysed reaction is an acyl phosphate + H2O = a carboxylate + phosphate + H(+). This is Acylphosphatase (acyP) from Cupriavidus pinatubonensis (strain JMP 134 / LMG 1197) (Cupriavidus necator (strain JMP 134)).